The following is a 7524-amino-acid chain: Mucin-19 (7524 aa).

An N-terminal signal peptide occupies residues 1 to 20 (MKLILLYLAVVLCFVGKGAA). The interval 20-47 (ARSPTTTRTPTPSTSEKASHVPEATPTY) is disordered. Residues 21–34 (RSPTTTRTPTPSTS) are compositionally biased toward low complexity. The VWFD 1 domain occupies 55 to 225 (GEATMWGKDK…VCEDGVQYCD (171 aa)). The cysteines at positions 79 and 224 are disulfide-linked. Residues 298–353 (CPGKHIYKECGPSNPPTCSNVAPFQDSECVSGCTCPEGYLLDDIGEKGKCVLKEKC) form the TIL domain. VWFD domains are found at residues 392–568 (GICK…EGSP) and 851–1025 (STCH…QECS). Disulfide bonds link Cys394–Cys529, Cys434–Cys442, Cys853–Cys989, Cys875–Cys1024, Cys884–Cys986, and Cys900–Cys907. Residues 1244 to 1261 (AAATRASSSTSGSVETSV) show a composition bias toward low complexity. Disordered stretches follow at residues 1244–7217 (AAAT…SSLA) and 7249–7297 (SVIK…CPDS). A compositionally biased stretch (polar residues) spans 1262-1289 (PATTSTSKAQAHITTASSTETSALNSTA). 2 stretches are compositionally biased toward low complexity: residues 1320 to 7099 (PAVS…AGSG) and 7112 to 7217 (STSG…SSLA). 36 repeat units span residues 1321–1483 (AVST…TTGP), 1484–1646 (AVST…TTGP), 1647–1809 (AVST…TTGP), 1810–1972 (AVST…TTGP), 1973–2135 (AVST…TTGP), 2136–2298 (AVST…TTGP), 2299–2461 (AVST…TTGP), 2462–2624 (AVST…TTGP), 2625–2787 (AVST…TTGP), 2788–2950 (AVST…TTGP), 2951–3113 (AVST…TTGP), 3114–3276 (AVST…TTGP), 3277–3439 (AVST…TTGP), 3440–3602 (AVST…TTGP), 3603–3765 (AVST…TTGP), 3766–3928 (AVST…TTGP), 3929–4091 (AVST…TTGP), 4092–4254 (AVST…TTGP), 4255–4417 (AVST…TTGP), 4418–4580 (AVST…TTGP), 4581–4743 (AVST…TTGP), 4744–4906 (AVST…TTGP), 4907–5069 (AVST…TTGP), 5070–5232 (AVST…TTGP), 5233–5395 (AVST…TTGP), 5396–5558 (AVST…TTGP), 5559–5721 (AVST…TTGP), 5722–5884 (AVST…TTGP), 5885–6047 (AVST…TTGP), 6048–6210 (AVST…TTGP), 6211–6373 (AVST…TTGP), 6374–6536 (AVST…TTGP), 6537–6699 (AVST…TTGP), 6700–6862 (AVST…TTGP), 6863–7025 (AVST…TTGP), and 7026–7188 (AVST…TTGP). The approximate repeats stretch occupies residues 1321 to 7188 (AVSTTSAGST…AETAGSTTGP (5868 aa)). A compositionally biased stretch (polar residues) spans 7261–7291 (AKSNETTGRTTSMPASTSVAPGVTTSPNISQ). VWFC domains are found at residues 7302-7368 (PVCH…GHCE) and 7370-7432 (RTCL…YKCK). Intrachain disulfides connect Cys7435/Cys7482, Cys7449/Cys7496, Cys7458/Cys7512, and Cys7462/Cys7514. A CTCK domain is found at 7435–7519 (CRTTPVNVTV…TTCSCRDQCE (85 aa)).

As to expression, specifically expressed in sublingual salivary glands. Expressed by mucous cells of the submandibular gland and submucosal gland of the trachea. Expression is altered in sld (sublingual gland differentiation arrest) mutants.

Its subcellular location is the secreted. Its function is as follows. May function in ocular mucus homeostasis. The chain is Mucin-19 (Muc19) from Mus musculus (Mouse).